Consider the following 1407-residue polypeptide: DNA-directed RNA polymerase subunit beta' (1407 aa).

The Zn(2+) site is built by Cys70, Cys72, Cys85, and Cys88. Residues Asp460, Asp462, and Asp464 each contribute to the Mg(2+) site. N6-acetyllysine is present on Lys972.

Belongs to the RNA polymerase beta' chain family. As to quaternary structure, the RNAP catalytic core consists of 2 alpha, 1 beta, 1 beta' and 1 omega subunit. When a sigma factor is associated with the core the holoenzyme is formed, which can initiate transcription. Mg(2+) is required as a cofactor. The cofactor is Zn(2+).

It catalyses the reaction RNA(n) + a ribonucleoside 5'-triphosphate = RNA(n+1) + diphosphate. In terms of biological role, DNA-dependent RNA polymerase catalyzes the transcription of DNA into RNA using the four ribonucleoside triphosphates as substrates. The sequence is that of DNA-directed RNA polymerase subunit beta' from Escherichia coli O6:K15:H31 (strain 536 / UPEC).